A 475-amino-acid chain; its full sequence is tRNA-2-methylthio-N(6)-dimethylallyladenosine synthase (475 aa).

The 118-residue stretch at 3-120 folds into the MTTase N-terminal domain; the sequence is KKLHIKTWGC…LPEMIDQIRA (118 aa). The [4Fe-4S] cluster site is built by Cys-12, Cys-49, Cys-83, Cys-157, Cys-161, and Cys-164. The Radical SAM core domain maps to 143–375; the sequence is RADGPSAFVS…QDRITQQAMR (233 aa). One can recognise a TRAM domain in the interval 378-441; the sequence is RQMVGTVQRI…TNSLRGVFIR (64 aa).

Belongs to the methylthiotransferase family. MiaB subfamily. In terms of assembly, monomer. [4Fe-4S] cluster is required as a cofactor.

The protein localises to the cytoplasm. The enzyme catalyses N(6)-dimethylallyladenosine(37) in tRNA + (sulfur carrier)-SH + AH2 + 2 S-adenosyl-L-methionine = 2-methylsulfanyl-N(6)-dimethylallyladenosine(37) in tRNA + (sulfur carrier)-H + 5'-deoxyadenosine + L-methionine + A + S-adenosyl-L-homocysteine + 2 H(+). Catalyzes the methylthiolation of N6-(dimethylallyl)adenosine (i(6)A), leading to the formation of 2-methylthio-N6-(dimethylallyl)adenosine (ms(2)i(6)A) at position 37 in tRNAs that read codons beginning with uridine. The protein is tRNA-2-methylthio-N(6)-dimethylallyladenosine synthase of Shewanella halifaxensis (strain HAW-EB4).